Here is a 385-residue protein sequence, read N- to C-terminus: DNA replication and repair protein RecF (385 aa).

An ATP-binding site is contributed by 30-37; that stretch reads GPNGYGKT.

Belongs to the RecF family.

It localises to the cytoplasm. Its function is as follows. The RecF protein is involved in DNA metabolism; it is required for DNA replication and normal SOS inducibility. RecF binds preferentially to single-stranded, linear DNA. It also seems to bind ATP. In Mycobacterium tuberculosis (strain ATCC 25177 / H37Ra), this protein is DNA replication and repair protein RecF.